The chain runs to 214 residues: Thiamine-phosphate synthase (214 aa).

Residues 37 to 41 and Asn73 each bind 4-amino-2-methyl-5-(diphosphooxymethyl)pyrimidine; that span reads QYREK. Mg(2+)-binding residues include Asp74 and Asp93. Ser112 lines the 4-amino-2-methyl-5-(diphosphooxymethyl)pyrimidine pocket. 139 to 141 is a binding site for 2-[(2R,5Z)-2-carboxy-4-methylthiazol-5(2H)-ylidene]ethyl phosphate; it reads TIS. Residue Lys142 coordinates 4-amino-2-methyl-5-(diphosphooxymethyl)pyrimidine. 2-[(2R,5Z)-2-carboxy-4-methylthiazol-5(2H)-ylidene]ethyl phosphate contacts are provided by residues Gly171 and 191–192; that span reads IS.

This sequence belongs to the thiamine-phosphate synthase family. The cofactor is Mg(2+).

It carries out the reaction 2-[(2R,5Z)-2-carboxy-4-methylthiazol-5(2H)-ylidene]ethyl phosphate + 4-amino-2-methyl-5-(diphosphooxymethyl)pyrimidine + 2 H(+) = thiamine phosphate + CO2 + diphosphate. The catalysed reaction is 2-(2-carboxy-4-methylthiazol-5-yl)ethyl phosphate + 4-amino-2-methyl-5-(diphosphooxymethyl)pyrimidine + 2 H(+) = thiamine phosphate + CO2 + diphosphate. It catalyses the reaction 4-methyl-5-(2-phosphooxyethyl)-thiazole + 4-amino-2-methyl-5-(diphosphooxymethyl)pyrimidine + H(+) = thiamine phosphate + diphosphate. It functions in the pathway cofactor biosynthesis; thiamine diphosphate biosynthesis; thiamine phosphate from 4-amino-2-methyl-5-diphosphomethylpyrimidine and 4-methyl-5-(2-phosphoethyl)-thiazole: step 1/1. Condenses 4-methyl-5-(beta-hydroxyethyl)thiazole monophosphate (THZ-P) and 2-methyl-4-amino-5-hydroxymethyl pyrimidine pyrophosphate (HMP-PP) to form thiamine monophosphate (TMP). In Listeria monocytogenes serotype 4b (strain F2365), this protein is Thiamine-phosphate synthase.